The chain runs to 421 residues: Gamma-glutamyl phosphate reductase (421 aa).

It belongs to the gamma-glutamyl phosphate reductase family.

The protein localises to the cytoplasm. The enzyme catalyses L-glutamate 5-semialdehyde + phosphate + NADP(+) = L-glutamyl 5-phosphate + NADPH + H(+). It participates in amino-acid biosynthesis; L-proline biosynthesis; L-glutamate 5-semialdehyde from L-glutamate: step 2/2. In terms of biological role, catalyzes the NADPH-dependent reduction of L-glutamate 5-phosphate into L-glutamate 5-semialdehyde and phosphate. The product spontaneously undergoes cyclization to form 1-pyrroline-5-carboxylate. This Roseobacter denitrificans (strain ATCC 33942 / OCh 114) (Erythrobacter sp. (strain OCh 114)) protein is Gamma-glutamyl phosphate reductase.